The sequence spans 2212 residues: MSIRKSTTSPVSGTDRADLNDSFAVSEAEPSQLHGHVEYGADVSVGVEDASGFTAEDAFQVGGEEDEEQVSTVTNGAVVPQSVVAAESADEDVLSRSTKKEEFLPESTSIAEPVKSDVITNVIDANADTGLDDDPWMKDGTPEFPPADENLPEVPPVAETKVETSKSIAKQQIYGEKVEDFTENSASPQEVDSKQTSSTIADFIPTPEHIHSNLHTSETENEPIKQSQLPWESHVEQIEALPWEEQPQKVEHVLPWEEKPDEVSQKDEALPWEERRVEHPEQAAESTLPWEEQPNVEEFQAHEPALPWEERPEVEESSLPWEEKVGESQGQEAALPWEEQQEVEVSSLLLEEKVRESSLPWEGEEGESQAQESKLPWEEQRIQSTPPSEEQVLEPVEGSSLPVEEKDSTEGSLPWNQHHEGEAQEILPWEQSTKPQDTQPQVSQEELHDYSVSNVISQSEIVEEQAQPVSQAYESQFLAGFFTERRPEQESETKQESLDELFEKDEDFLPELKQPVEQSTQTSKPKEFNLPELDLDDDLLLDDDLLDDDEPELVPEPVAPVEPIQEAIQNNVAKSPRQTYIPTQPHHNMYAPQISRTDTGEYVKKLEENKKRNDAYDFPDILMPPKVKPAPRHHQPTTKYSQPVASPNLSNIPSAPPATTIPPPVSIGIEASKKELPTTPQVAPGKPKSFFEELPVSMPKKAARAAPVKAVNQPHIQKSPQISNTPISASSKPAPVNPYMPSNTQKQNPHSPLQGSQYSFPRKTSSGLAPPPALNQYAPPSSNQYATVSAQVQPGLPQSSLPQSGMSQPGLQPFPQPQGHLVPPNLVAPQIQNSPLGQPQQTHNYAPPINTNVARAQGNLSATSPYVPNAGPYAPNNHNRSHSRASSLVGGGKGKEINPYAPALPPVSHSGTSPSIAQSSLTSRNRGISNPRNIYSKAQPAPKISNPNSLNQRQFPIFNWSNSQKVVTLIPNSSHNLYESHGESIRVRAAIDLLKDKEMYSTFPGPLSKSKTKRKDVEKWLESNIALLTTNSIENQDEYLLNQVLLEAVKFEGGFNSHEFIKAVCMVLNPTADYNTPGDISGMTSVSANAYKLDNAGIGIVFGLIQGGHIDKALEFTLSKGDWALALVVSNFAGHDRFAKVAADYARFSFPYQKSNNKIHHIIPILLKLAVGNVKSVIDDLNAVATEGEYASHHWREIVSSVIISGVSKSQDFLVEFGKFLGLHHNIAASEICYVIAGLPLSPQALQPSGIVVSVIGSLTGTSMYTEVYEYILKISTVFVQQGVGIIPHLLPLKLKHATVLADYGLFNESQKYIDSINNNMKTLGNRSPYLNAAFIHELQSLIVRLQELGSSESSWFSGKMSKVNLDNIWGQIDKFIGGEEPKSKSGENGVFSKFSPSVSRNTSTLDFTAMNVSSNKYPHSSPQMPSGQFGSSSIAPSTADGVSVPVTRAMPPLQSFNSTPAINTLSMNSKYSLPHLQQTKNASFSVHSQSTQVPPSHHSTPQQSHVHPNVPLHHAAESKYSPSNASPQVPDSTASPYVPPVKRTTPRVAAKAVNATGPYVYANPEGHVSNSSIGSHRQHGYHPPTSQTPTVNAKRHSVASVISNEATPNSEVIHSHHNHSPSIQSDISMDYPSEFKPPPAVKQIVDHKLVSALNDHAPDTIDESPEFKSEAIVEKVPPLSASQEVSGQPSAASTSVPSSEKAATVDDETTSSAASAPPPQSKASLKKPAKVNPYAPGANRSGTARKSKYGPPTGASSSKYSVPANLAQQDEPINDDTLKYGSMFDYSGYKTGEPTVADNDNVEPPTQSETTSKHAAEEDVTELIVEPKPSIPESPSAPKIVREPETSAPPHFKQPESHFAPFGYNTPLKARTKHYANIDDSFDNSEVSGDQDLTDIHTPRKRPLILNNGPPQLTGKESMFNPYQGDSGVNKFGLDFPIPGSPDYTTRANSVVDQPGYFSSRLSQSQQSALYQQYEVEDDTVRDYVPTVEEDDEEDEDEEDRDKKRLQEEEEKRAKAASEEAKKKASEAAAKRDPGRGWFNWSGKNDGKPKPIKAKLGNPSTFYYDEKHKRWLDKSRPIEEQLQAAAPPPPPAMKKKAPAASSNITASSGPPSAGPPPGINPSGVAPTAAPSGPPSAPSGVTSGPPSIGTGPSNGAGGPPFAKATSVQSSAPSLANAGLDDLLSMGGSSVAGGTRKAKRNTRRGHINVFDKK.

Composition is skewed to polar residues over residues 1–12 (MSIRKSTTSPVS) and 183–200 (ENSA…SSTI). Disordered regions lie at residues 1 to 31 (MSIR…AEPS), 173 to 343 (IYGE…QQEV), 355 to 451 (RESS…HDYS), 480 to 563 (GFFT…PVEP), 626 to 666 (KVKP…PPVS), 705 to 849 (AAPV…APPI), 861 to 948 (SATS…SNPN), 1380 to 1400 (EEPK…PSVS), 1416 to 1446 (NKYP…VSVP), 1484 to 1542 (SFSV…VPPV), 1572 to 1593 (SSIG…PTVN), 1680 to 1866 (LSAS…FGYN), 1883 to 1927 (FDNS…YQGD), and 1960 to 2212 (SSRL…FDKK). Positions 246–282 (QPQKVEHVLPWEEKPDEVSQKDEALPWEERRVEHPEQ) are enriched in basic and acidic residues. Positions 430–444 (EQSTKPQDTQPQVSQ) are enriched in polar residues. A compositionally biased stretch (basic and acidic residues) spans 483–497 (TERRPEQESETKQES). Composition is skewed to acidic residues over residues 498 to 509 (LDELFEKDEDFL) and 533 to 553 (LDLD…EPEL). The segment covering 637-651 (TTKYSQPVASPNLSN) has biased composition (polar residues). Over residues 654–665 (SAPPATTIPPPV) the composition is skewed to pro residues. Composition is skewed to polar residues over residues 714–731 (PHIQ…SASS), 740–767 (MPSN…TSSG), and 778–807 (APPS…SGMS). Over residues 808 to 819 (QPGLQPFPQPQG) the composition is skewed to low complexity. 2 stretches are compositionally biased toward polar residues: residues 830-849 (QIQN…APPI) and 909-933 (HSGT…NPRN). Polar residues-rich tracts occupy residues 1416 to 1437 (NKYP…SIAP), 1484 to 1507 (SFSV…QSHV), and 1521 to 1536 (YSPS…STAS). Positions 1681 to 1699 (SASQEVSGQPSAASTSVPS) are enriched in polar residues. A compositionally biased stretch (low complexity) spans 1960-1975 (SSRLSQSQQSALYQQY). Positions 1989–2001 (VEEDDEEDEDEED) are enriched in acidic residues. Composition is skewed to basic and acidic residues over residues 2002–2036 (RDKK…RDPG) and 2065–2080 (YDEK…RPIE). Composition is skewed to low complexity over residues 2121 to 2131 (NPSGVAPTAAP) and 2138 to 2147 (PSGVTSGPPS). A compositionally biased stretch (basic residues) spans 2195-2205 (RKAKRNTRRGH).

Belongs to the SEC16 family.

The protein resides in the endoplasmic reticulum membrane. Functionally, involved in the initiation of assembly of the COPII coat required for the formation of transport vesicles from the endoplasmic reticulum (ER) and the selection of cargo molecules. Also involved in autophagy. This Scheffersomyces stipitis (strain ATCC 58785 / CBS 6054 / NBRC 10063 / NRRL Y-11545) (Yeast) protein is COPII coat assembly protein SEC16 (SEC16).